A 236-amino-acid chain; its full sequence is CD81 antigen (236 aa).

The Cytoplasmic portion of the chain corresponds to 1-12; it reads MGVEGCTKCIKY. A helical membrane pass occupies residues 13-33; sequence LLFVFNFVFWLAGGVILGVAL. Residues 34 to 63 lie on the Extracellular side of the membrane; sequence WLRHDPQTTNLLYLELGDRPAPNTFYVGIY. The helical transmembrane segment at 64 to 84 threads the bilayer; sequence ILIAVGAVMMFVGFLGCYGAI. Residues 85 to 89 are Cytoplasmic-facing; the sequence is QESQC. Residues 90-112 traverse the membrane as a helical segment; that stretch reads LLGTFFTCLVILFACEVAAGIWG. Residues 113–201 lie on the Extracellular side of the membrane; that stretch reads FVNKDQIAKD…GKIDELFSGK (89 aa). Disulfide bonds link Cys-156-Cys-190 and Cys-157-Cys-175. Residues 202 to 224 traverse the membrane as a helical segment; it reads LYLIGIAAIVVAVIMIFEMILSM. Position 219 (Glu-219) interacts with cholesterol. The Cytoplasmic portion of the chain corresponds to 225–236; sequence VLCCGIRNSSVY.

This sequence belongs to the tetraspanin (TM4SF) family. In terms of assembly, homodimer. Part of a complex composed of CD19, CR2/CD21, CD81 and IFITM1/CD225 in the membrane of mature B cells. Interacts (via the second extracellular domain) with CD19; this interaction is initiated early during biosynthesis in the ER and enables trafficking of only properly folded CD19. Part of a complex that includes MHC class II/HLA-DR molecules and IFITM1. Interacts with IFITM1. Interacts with IFITM2 and IFITM3. Part of integrin-tetraspanin complex composed of CD9, CD81, beta-1 and beta-2 integrins in the membrane of monocyte/macrophages. Interacts (via the second extracellular domain) with integrin ITGAV:ITGB3. Interacts with CD247/CD3 zeta, ICAM1 and CD9 at the immune synapse on T cell membrane. Part of a GPCR-tetraspanin complex consisting at least of ADGRG1, CD81, possibly CD9, and GNA11 in which CD81 enhances the association of ADGRG1 with GNA11. Part of a complex composed of CD9, CD81, PTGFRN and IGSF8. Interacts directly with IGSF8. Interacts with CD53 and SCIMP. Interacts with SAMHD1 (via its C-terminus). Interacts with glypican GPC3 and with the transcriptional repressor HHEX; binding to GPC3 decreases the availability of free CD81 for binding to HHEX, resulting in nuclear translocation of HHEX and transcriptional repression. Interacts with CLDN1. Interacts with CLDN6 and CLDN9. Post-translationally, not glycosylated. Likely constitutively palmitoylated at low levels. Protein palmitoylation is up-regulated upon coligation of BCR and CD9-C2R-CD81 complexes in lipid rafts.

It is found in the cell membrane. The protein localises to the basolateral cell membrane. Its function is as follows. Structural component of specialized membrane microdomains known as tetraspanin-enriched microdomains (TERMs), which act as platforms for receptor clustering and signaling. Essential for trafficking and compartmentalization of CD19 receptor on the surface of activated B cells. Upon initial encounter with microbial pathogens, enables the assembly of CD19-CR2/CD21 and B cell receptor (BCR) complexes at signaling TERMs, lowering the threshold dose of antigen required to trigger B cell clonal expansion and antibody production. In T cells, facilitates the localization of CD247/CD3 zeta at antigen-induced synapses with B cells, providing for costimulation and polarization toward T helper type 2 phenotype. Present in MHC class II compartments, may also play a role in antigen presentation. Can act both as positive and negative regulator of homotypic or heterotypic cell-cell fusion processes. Positively regulates sperm-egg fusion and may be involved in acrosome reaction. In myoblasts, associates with CD9 and PTGFRN and inhibits myotube fusion during muscle regeneration. In macrophages, associates with CD9 and beta-1 and beta-2 integrins, and prevents macrophage fusion into multinucleated giant cells specialized in ingesting complement-opsonized large particles. Also prevents the fusion of mononuclear cell progenitors into osteoclasts in charge of bone resorption. May regulate the compartmentalization of enzymatic activities. In T cells, defines the subcellular localization of dNTPase SAMHD1 and permits its degradation by the proteasome, thereby controlling intracellular dNTP levels. Also involved in cell adhesion and motility. Positively regulates integrin-mediated adhesion of macrophages, particularly relevant for the inflammatory response in the lung. In Bos taurus (Bovine), this protein is CD81 antigen (CD81).